Here is a 379-residue protein sequence, read N- to C-terminus: Cytochrome b (379 aa).

Transmembrane regions (helical) follow at residues 33-53 (FGSL…FLAM), 77-98 (WLIR…YFHI), 113-133 (WNMG…GYVL), and 178-198 (FFAF…IHLL). 2 residues coordinate heme b: histidine 83 and histidine 97. Residues histidine 182 and histidine 196 each coordinate heme b. Position 201 (histidine 201) interacts with a ubiquinone. The next 4 membrane-spanning stretches (helical) occupy residues 226-246 (IKDI…VMFS), 288-308 (LGGV…PILH), 320-340 (LSQC…WIGG), and 347-367 (FITI…ILMP).

It belongs to the cytochrome b family. The cytochrome bc1 complex contains 11 subunits: 3 respiratory subunits (MT-CYB, CYC1 and UQCRFS1), 2 core proteins (UQCRC1 and UQCRC2) and 6 low-molecular weight proteins (UQCRH/QCR6, UQCRB/QCR7, UQCRQ/QCR8, UQCR10/QCR9, UQCR11/QCR10 and a cleavage product of UQCRFS1). This cytochrome bc1 complex then forms a dimer. Heme b is required as a cofactor.

It localises to the mitochondrion inner membrane. Its function is as follows. Component of the ubiquinol-cytochrome c reductase complex (complex III or cytochrome b-c1 complex) that is part of the mitochondrial respiratory chain. The b-c1 complex mediates electron transfer from ubiquinol to cytochrome c. Contributes to the generation of a proton gradient across the mitochondrial membrane that is then used for ATP synthesis. The polypeptide is Cytochrome b (MT-CYB) (Ctenomys leucodon (White-toothed tuco-tuco)).